Reading from the N-terminus, the 416-residue chain is MLGNKLSISDLKDIKNKKVLVRVDFNVPIENGIIKDTNRITATLPTINHLKKEGASKIILISHCGRPDGLRNEKYTLKPVAETLKGLLGEEVLFLNDCVGKEVEDKINAAKENSVILLENLRFHIEEEGKGVDANGNKVKANKEDVEKFQNDLTKLADVFINDAFGTAHRAHSSMVGVKLNVKASGFLMKKELEYFSKALENPQRPLLAILGGAKVSDKIQLIKNLLDKVDRMIIGGGMAYTFKKVLNNMKIGTSLFDEAGSKIVGEIMEKAKAKNVQIFLPVDFKIADNFDNNANTKFVTDEEGIPDNWMGLDAGPKSIENYKDVILTSKTVIWNGPQGVFEMPNFAKGSIECLNLVVEVTKKGAITIVGGGDTASLVEQQNKKNEISHVSTGGGASLELLEGKELPGVLALSNK.

14 residues coordinate (2R)-3-phosphoglycerate: Val-23, Asp-24, Phe-25, Asn-26, Asn-38, Arg-39, Ser-62, His-63, Gly-65, Arg-66, Leu-121, Arg-122, His-169, and Arg-170. Gly-213 provides a ligand contact to ADP. Gly-213 provides a ligand contact to CDP. Residues Ala-214 and Lys-215 each contribute to the AMP site. ATP contacts are provided by Ala-214 and Lys-215. Residue Ala-214 coordinates Mg(2+). Asp-218 is a binding site for CDP. A Mg(2+)-binding site is contributed by Asp-218. Lys-219 lines the AMP pocket. An ATP-binding site is contributed by Lys-219. Gly-237 serves as a coordination point for ADP. Gly-237 contacts CDP. Positions 238 and 312 each coordinate AMP. Residues Gly-238 and Gly-312 each contribute to the ATP site. Positions 337 and 342 each coordinate CDP. Residue Phe-342 participates in ADP binding. AMP is bound at residue Glu-343. Mg(2+) is bound at residue Asp-374. Thr-375 is a binding site for ATP.

This sequence belongs to the phosphoglycerate kinase family. As to quaternary structure, monomer. Mg(2+) is required as a cofactor.

It carries out the reaction (2R)-3-phosphoglycerate + ATP = (2R)-3-phospho-glyceroyl phosphate + ADP. Its pathway is carbohydrate degradation; glycolysis; pyruvate from D-glyceraldehyde 3-phosphate: step 2/5. The polypeptide is Phosphoglycerate kinase (PGK) (Plasmodium falciparum (isolate 3D7)).